A 433-amino-acid polypeptide reads, in one-letter code: Trigger factor (433 aa).

The PPIase FKBP-type domain maps to 161–246 (EDRVVIDFVG…LKKVENIVLP (86 aa)).

Belongs to the FKBP-type PPIase family. Tig subfamily.

The protein localises to the cytoplasm. The enzyme catalyses [protein]-peptidylproline (omega=180) = [protein]-peptidylproline (omega=0). Involved in protein export. Acts as a chaperone by maintaining the newly synthesized protein in an open conformation. Functions as a peptidyl-prolyl cis-trans isomerase. The chain is Trigger factor from Actinobacillus pleuropneumoniae serotype 5b (strain L20).